The sequence spans 122 residues: Ribosome-binding factor A (122 aa).

Belongs to the RbfA family. In terms of assembly, monomer. Binds 30S ribosomal subunits, but not 50S ribosomal subunits or 70S ribosomes.

It localises to the cytoplasm. In terms of biological role, one of several proteins that assist in the late maturation steps of the functional core of the 30S ribosomal subunit. Associates with free 30S ribosomal subunits (but not with 30S subunits that are part of 70S ribosomes or polysomes). Required for efficient processing of 16S rRNA. May interact with the 5'-terminal helix region of 16S rRNA. The protein is Ribosome-binding factor A of Pelobacter propionicus (strain DSM 2379 / NBRC 103807 / OttBd1).